The following is a 606-amino-acid chain: Elongation factor 4 (606 aa).

The tr-type G domain occupies 10–192 (IRKKNFCIIA…AICKYVPSPR (183 aa)). GTP-binding positions include 22–27 (DHGKST) and 139–142 (NKID).

This sequence belongs to the TRAFAC class translation factor GTPase superfamily. Classic translation factor GTPase family. LepA subfamily.

Its subcellular location is the cell inner membrane. The catalysed reaction is GTP + H2O = GDP + phosphate + H(+). Its function is as follows. Required for accurate and efficient protein synthesis under certain stress conditions. May act as a fidelity factor of the translation reaction, by catalyzing a one-codon backward translocation of tRNAs on improperly translocated ribosomes. Back-translocation proceeds from a post-translocation (POST) complex to a pre-translocation (PRE) complex, thus giving elongation factor G a second chance to translocate the tRNAs correctly. Binds to ribosomes in a GTP-dependent manner. The chain is Elongation factor 4 from Borreliella burgdorferi (strain ATCC 35210 / DSM 4680 / CIP 102532 / B31) (Borrelia burgdorferi).